The chain runs to 147 residues: Interleukin-4 (147 aa).

Residues 1 to 24 (MGLPAQLPVTLLCLLAGTAHFIQG) form the signal peptide. A disulfide bond links C48 and C88. An N-linked (GlcNAc...) asparagine glycan is attached at N62.

It belongs to the IL-4/IL-13 family.

The protein localises to the secreted. In terms of biological role, participates in at least several B-cell activation processes as well as of other cell types. It is a costimulator of DNA-synthesis. It induces the expression of class II MHC molecules on resting B-cells. It enhances both secretion and cell surface expression of IgE and IgG1. It also regulates the expression of the low affinity Fc receptor for IgE (CD23) on both lymphocytes and monocytes. Positively regulates IL31RA expression in macrophages. Stimulates autophagy in dendritic cells by interfering with mTORC1 signaling and through the induction of RUFY4. The polypeptide is Interleukin-4 (IL4) (Oryctolagus cuniculus (Rabbit)).